We begin with the raw amino-acid sequence, 399 residues long: Protein phosphatase 2C 37 (399 aa).

The 286-residue stretch at 104–389 (KIGTTSVCGR…DNVSVVVVDL (286 aa)) folds into the PPM-type phosphatase domain. Residues D142 and G143 each contribute to the Mn(2+) site. The Zn(2+) site is built by C146, H148, C208, and C210. 3 residues coordinate Mn(2+): D327, D331, and D380.

The protein belongs to the PP2C family. As to quaternary structure, interacts with AKT2/AKT3. Interacts with ABA-bounded PYR1, PYL1, PYL2, PYL3, PYL4, PYL9 and PYL12, and with free PYL2, PYL3, PYL4 and PYL13. Binds to and inactivates SLAC1 and SRK2E. The inactivation of SRK2E does not require phosphatase activity. Interacts with CBL1, CBL2, CBL3, CBL5, and CBL7, but not CBL4, CBL6, and CBL9. Interacts with RGLG1 and RGLG5. Interacts with KIN10. Mg(2+) is required as a cofactor. Mn(2+) serves as cofactor. Post-translationally, ubiquitinated by RGLG1 and RGLG5 in response to abscisic acid (ABA). Ubiquitination of PP2CA leads to its degradation by the proteasome. As to expression, mostly expressed in seeds and leaves, and, to a lower extent, in roots, stems, and flowers, particularly in siliques. Essentially found in the phloem.

The catalysed reaction is O-phospho-L-seryl-[protein] + H2O = L-seryl-[protein] + phosphate. It carries out the reaction O-phospho-L-threonyl-[protein] + H2O = L-threonyl-[protein] + phosphate. Repressed by PYR/PYL/RCAR ABA receptors in an ABA-dependent manner. In terms of biological role, major negative regulator of abscisic acid (ABA) responses during seed germination and cold acclimation. Confers insensitivity to ABA. Modulates negatively the AKT2/3 activity, which mediates K(+) transport and membrane polarization during stress situations, probably by dephosphorylation. Prevents stomata closure by inactivating the S-type anion efflux channel SLAC1 and its activator SRK2E. Represses KIN10 activity by the specific dephosphorylation of its T-loop Thr-198, leading to a poststress inactivation of SnRK1 signaling. This Arabidopsis thaliana (Mouse-ear cress) protein is Protein phosphatase 2C 37 (PP2CA).